A 425-amino-acid polypeptide reads, in one-letter code: Serine--tRNA ligase (425 aa).

Residue 230-232 participates in L-serine binding; it reads TAE. 261 to 263 serves as a coordination point for ATP; sequence RSE. Residue Glu284 participates in L-serine binding. 348 to 351 contributes to the ATP binding site; that stretch reads EISS. Ser384 lines the L-serine pocket.

It belongs to the class-II aminoacyl-tRNA synthetase family. Type-1 seryl-tRNA synthetase subfamily. Homodimer. The tRNA molecule binds across the dimer.

The protein localises to the cytoplasm. The catalysed reaction is tRNA(Ser) + L-serine + ATP = L-seryl-tRNA(Ser) + AMP + diphosphate + H(+). The enzyme catalyses tRNA(Sec) + L-serine + ATP = L-seryl-tRNA(Sec) + AMP + diphosphate + H(+). It participates in aminoacyl-tRNA biosynthesis; selenocysteinyl-tRNA(Sec) biosynthesis; L-seryl-tRNA(Sec) from L-serine and tRNA(Sec): step 1/1. Its function is as follows. Catalyzes the attachment of serine to tRNA(Ser). Is also able to aminoacylate tRNA(Sec) with serine, to form the misacylated tRNA L-seryl-tRNA(Sec), which will be further converted into selenocysteinyl-tRNA(Sec). The chain is Serine--tRNA ligase from Streptococcus pyogenes serotype M5 (strain Manfredo).